The primary structure comprises 91 residues: RNA-binding protein Hfq (91 aa).

A Sm domain is found at 9–68 (DPYLNALRRERIPVSIYLVNGIKLQGQIESFDQFVILLKNTVNQMVYKHAISTVVPARSV). The interval 69 to 91 (SHHNNNHHTAPTEAVENVETQAE) is disordered.

It belongs to the Hfq family. As to quaternary structure, homohexamer.

In terms of biological role, RNA chaperone that binds small regulatory RNA (sRNAs) and mRNAs to facilitate mRNA translational regulation in response to envelope stress, environmental stress and changes in metabolite concentrations. Also binds with high specificity to tRNAs. The protein is RNA-binding protein Hfq of Haemophilus influenzae (strain ATCC 51907 / DSM 11121 / KW20 / Rd).